A 326-amino-acid polypeptide reads, in one-letter code: N-acetyl-gamma-glutamyl-phosphate reductase (326 aa).

C155 is an active-site residue.

The protein belongs to the NAGSA dehydrogenase family. Type 1 subfamily.

It localises to the cytoplasm. The enzyme catalyses N-acetyl-L-glutamate 5-semialdehyde + phosphate + NADP(+) = N-acetyl-L-glutamyl 5-phosphate + NADPH + H(+). It participates in amino-acid biosynthesis; L-arginine biosynthesis; N(2)-acetyl-L-ornithine from L-glutamate: step 3/4. Its function is as follows. Catalyzes the NADPH-dependent reduction of N-acetyl-5-glutamyl phosphate to yield N-acetyl-L-glutamate 5-semialdehyde. This chain is N-acetyl-gamma-glutamyl-phosphate reductase, found in Shewanella baltica (strain OS223).